Here is a 149-residue protein sequence, read N- to C-terminus: Transcriptional repressor NrdR (149 aa).

A zinc finger spans residues 3 to 34 (CPFCSATDTKVIDSRLVADGHQVRRRRECTLC). Residues 49–139 (PRVIKRDDTR…VYRAFEDVSQ (91 aa)) enclose the ATP-cone domain.

This sequence belongs to the NrdR family. It depends on Zn(2+) as a cofactor.

Negatively regulates transcription of bacterial ribonucleotide reductase nrd genes and operons by binding to NrdR-boxes. The protein is Transcriptional repressor NrdR of Shewanella denitrificans (strain OS217 / ATCC BAA-1090 / DSM 15013).